A 117-amino-acid polypeptide reads, in one-letter code: MTHAHITSWFIMIILFLIAVSMQRSGAAKANIIKMVLRLFYIITIITGLLLLHSIASISGLYWLKALAGLWVIGAMEMVLVAGKKGKSMAAGWTQWVIALVVTLFLGLLLPLGFDLF.

4 helical membrane passes run 1–21, 39–59, 61–81, and 97–117; these read MTHA…IAVS, LFYI…ASIS, LYWL…MVLV, and VIAL…FDLF.

Belongs to the UPF0344 family.

The protein localises to the cell membrane. This chain is UPF0344 protein GTNG_0604, found in Geobacillus thermodenitrificans (strain NG80-2).